A 41-amino-acid polypeptide reads, in one-letter code: Photosystem I reaction center subunit IX (41 aa).

A helical membrane pass occupies residues 7 to 27; that stretch reads YLSTAPVLATVWMIITAGILI.

This sequence belongs to the PsaJ family.

The protein resides in the cellular thylakoid membrane. Its function is as follows. May help in the organization of the PsaE and PsaF subunits. The sequence is that of Photosystem I reaction center subunit IX from Trichodesmium erythraeum (strain IMS101).